The following is a 564-amino-acid chain: Eukaryotic translation initiation factor 3 subunit L (564 aa).

Serine 2 is modified (N-acetylserine). Phosphoserine is present on serine 21. In terms of domain architecture, PCI spans 331–537; the sequence is DAIRVFANIL…IHIADTKVAR (207 aa). An N6-acetyllysine mark is found at lysine 465 and lysine 549.

In terms of assembly, component of the eukaryotic translation initiation factor 3 (eIF-3) complex, which is composed of 13 subunits: EIF3A, EIF3B, EIF3C, EIF3D, EIF3E, EIF3F, EIF3G, EIF3H, EIF3I, EIF3J, EIF3K, EIF3L and EIF3M. The eIF-3 complex appears to include 3 stable modules: module A is composed of EIF3A, EIF3B, EIF3G and EIF3I; module B is composed of EIF3F, EIF3H, and EIF3M; and module C is composed of EIF3C, EIF3D, EIF3E, EIF3K and EIF3L. EIF3C of module C binds EIF3B of module A and EIF3H of module B, thereby linking the three modules. EIF3J is a labile subunit that binds to the eIF-3 complex via EIF3B. The eIF-3 complex interacts with RPS6KB1 under conditions of nutrient depletion. Mitogenic stimulation leads to binding and activation of a complex composed of MTOR and RPTOR, leading to phosphorylation and release of RPS6KB1 and binding of EIF4B to eIF-3. Interacts with RRN3.

It localises to the cytoplasm. Functionally, component of the eukaryotic translation initiation factor 3 (eIF-3) complex, which is required for several steps in the initiation of protein synthesis. The eIF-3 complex associates with the 40S ribosome and facilitates the recruitment of eIF-1, eIF-1A, eIF-2:GTP:methionyl-tRNAi and eIF-5 to form the 43S pre-initiation complex (43S PIC). The eIF-3 complex stimulates mRNA recruitment to the 43S PIC and scanning of the mRNA for AUG recognition. The eIF-3 complex is also required for disassembly and recycling of post-termination ribosomal complexes and subsequently prevents premature joining of the 40S and 60S ribosomal subunits prior to initiation. The eIF-3 complex specifically targets and initiates translation of a subset of mRNAs involved in cell proliferation, including cell cycling, differentiation and apoptosis, and uses different modes of RNA stem-loop binding to exert either translational activation or repression. Its function is as follows. (Microbial infection) In case of FCV infection, plays a role in the ribosomal termination-reinitiation event leading to the translation of VP2. The protein is Eukaryotic translation initiation factor 3 subunit L of Homo sapiens (Human).